Reading from the N-terminus, the 737-residue chain is Lysyl oxidase homolog 2A (737 aa).

The signal sequence occupies residues 1-18; it reads MAVSSALCIFSLLVLAQA. 4 SRCR domains span residues 29 to 130, 159 to 270, 294 to 393, and 403 to 512; these read LRLA…VICN, IRPI…VSCV, VRLR…VRCN, and IRLS…VSCS. 9 disulfide bridges follow: Cys55–Cys119, Cys68–Cys129, Cys99–Cys109, Cys188–Cys259, Cys201–Cys269, Cys235–Cys245, Cys319–Cys382, Cys332–Cys392, and Cys363–Cys373. Asn256 carries an N-linked (GlcNAc...) asparagine glycan. A glycan (N-linked (GlcNAc...) asparagine) is linked at Asn423. Disulfide bonds link Cys432–Cys498, Cys445–Cys511, and Cys479–Cys489. The interval 516–718 is lysyl-oxidase like; sequence PDLVLNAQLV…WTYSCHIGGS (203 aa). Ca(2+) is bound by residues Asp517 and Leu518. 4 disulfide bridges follow: Cys541–Cys592, Cys547–Cys662, Cys624–Cys640, and Cys630–Cys652. Residues His593, His595, and His597 each coordinate Cu cation. An N-linked (GlcNAc...) asparagine glycan is attached at Asn611. The segment at residues 620 to 656 is a cross-link (lysine tyrosylquinone (Lys-Tyr)); the sequence is KASFCLEDTHCDEGISKRYHCANFGEQGITVGCWDTY. A 2',4',5'-topaquinone modification is found at Tyr656. Positions 689, 691, 694, and 695 each coordinate Ca(2+). Residues Cys699 and Cys713 are joined by a disulfide bond.

It belongs to the lysyl oxidase family. Cu cation serves as cofactor. The cofactor is lysine tyrosylquinone residue. Post-translationally, the lysine tyrosylquinone cross-link (LTQ) is generated by condensation of the epsilon-amino group of a lysine with a topaquinone produced by oxidation of tyrosine.

The protein localises to the secreted. It is found in the extracellular space. It localises to the extracellular matrix. Its subcellular location is the basement membrane. The protein resides in the nucleus. The protein localises to the chromosome. It is found in the endoplasmic reticulum. The catalysed reaction is L-lysyl-[protein] + O2 + H2O = (S)-2-amino-6-oxohexanoyl-[protein] + H2O2 + NH4(+). In terms of biological role, mediates the post-translational oxidative deamination of lysine residues on target proteins leading to the formation of deaminated lysine (allysine). Acts as a transcription corepressor and specifically mediates deamination of trimethylated 'Lys-4' of histone H3 (H3K4me3), a specific tag for epigenetic transcriptional activation. Shows no activity against histone H3 when it is trimethylated on 'Lys-9' (H3K9me3) or 'Lys-27' (H3K27me3) or when 'Lys-4' is monomethylated (H3K4me1) or dimethylated (H3K4me2). Also mediates deamination of methylated TAF10, a member of the transcription factor IID (TFIID) complex, which induces release of TAF10 from promoters, leading to inhibition of TFIID-dependent transcription. LOXL2-mediated deamination of TAF10 results in transcriptional repression of genes required for embryonic stem cell pluripotency. Involved in epithelial to mesenchymal transition (EMT) and participates in repression of E-cadherin, probably by mediating deamination of histone H3. When secreted into the extracellular matrix, promotes cross-linking of extracellular matrix proteins by mediating oxidative deamination of peptidyl lysine residues in precursors to fibrous collagen and elastin. Acts as a regulator of sprouting angiogenesis, probably via collagen IV scaffolding. Acts as a regulator of chondrocyte differentiation, probably by regulating expression of factors that control chondrocyte differentiation. Required with loxl2b for correct expression of Sox2 and for neural differentiation. The polypeptide is Lysyl oxidase homolog 2A (loxl2a) (Danio rerio (Zebrafish)).